Consider the following 530-residue polypeptide: N-acetylmuramoyl-L-alanine amidase (530 aa).

The first 22 residues, methionine 1–alanine 22, serve as a signal peptide directing secretion. N-linked (GlcNAc...) asparagine glycosylation is found at asparagine 61, asparagine 80, and asparagine 174. Serine 219 is subject to Phosphoserine. An N-linked (GlcNAc...) asparagine glycan is attached at asparagine 335. The N-acetylmuramoyl-L-alanine amidase domain maps to phenylalanine 386–glycine 512. Histidine 390 contacts Zn(2+). A disulfide bond links cysteine 399 and cysteine 405. Asparagine 465 carries an N-linked (GlcNAc...) asparagine glycan. Residues histidine 502 and cysteine 510 each coordinate Zn(2+).

Belongs to the N-acetylmuramoyl-L-alanine amidase 2 family. It depends on Zn(2+) as a cofactor. As to expression, strongly expressed in liver and fetal liver.

Its subcellular location is the secreted. It is found in the membrane. The enzyme catalyses Hydrolyzes the link between N-acetylmuramoyl residues and L-amino acid residues in certain cell-wall glycopeptides.. May play a scavenger role by digesting biologically active peptidoglycan (PGN) into biologically inactive fragments. Has no direct bacteriolytic activity. The sequence is that of N-acetylmuramoyl-L-alanine amidase (Pglyrp2) from Mus musculus (Mouse).